The following is a 252-amino-acid chain: Imidazole glycerol phosphate synthase subunit HisF (252 aa).

Active-site residues include aspartate 11 and aspartate 130.

The protein belongs to the HisA/HisF family. Heterodimer of HisH and HisF.

The protein localises to the cytoplasm. It carries out the reaction 5-[(5-phospho-1-deoxy-D-ribulos-1-ylimino)methylamino]-1-(5-phospho-beta-D-ribosyl)imidazole-4-carboxamide + L-glutamine = D-erythro-1-(imidazol-4-yl)glycerol 3-phosphate + 5-amino-1-(5-phospho-beta-D-ribosyl)imidazole-4-carboxamide + L-glutamate + H(+). It functions in the pathway amino-acid biosynthesis; L-histidine biosynthesis; L-histidine from 5-phospho-alpha-D-ribose 1-diphosphate: step 5/9. Functionally, IGPS catalyzes the conversion of PRFAR and glutamine to IGP, AICAR and glutamate. The HisF subunit catalyzes the cyclization activity that produces IGP and AICAR from PRFAR using the ammonia provided by the HisH subunit. This chain is Imidazole glycerol phosphate synthase subunit HisF, found in Pelotomaculum thermopropionicum (strain DSM 13744 / JCM 10971 / SI).